Here is a 508-residue protein sequence, read N- to C-terminus: GMP synthase [glutamine-hydrolyzing] (508 aa).

Positions 1 to 189 (MILVLDFGSQ…ALLVCGCEKT (189 aa)) constitute a Glutamine amidotransferase type-1 domain. The Nucleophile role is filled by C78. Catalysis depends on residues H163 and E165. The GMPS ATP-PPase domain maps to 190–383 (WGMQHFAQRE…LGVSQDFLMR (194 aa)). Position 217–223 (217–223 (SGGVDST)) interacts with ATP.

As to quaternary structure, homodimer.

The enzyme catalyses XMP + L-glutamine + ATP + H2O = GMP + L-glutamate + AMP + diphosphate + 2 H(+). The protein operates within purine metabolism; GMP biosynthesis; GMP from XMP (L-Gln route): step 1/1. In terms of biological role, catalyzes the synthesis of GMP from XMP. This chain is GMP synthase [glutamine-hydrolyzing] (guaA), found in Helicobacter pylori (strain ATCC 700392 / 26695) (Campylobacter pylori).